A 144-amino-acid chain; its full sequence is Large ribosomal subunit protein uL15 (144 aa).

Residues 1–52 (MRLNTLSPAAGSKPSKKRVGRGIGSGLGKTGGRGHKGQKSRSGGKVRAGFEG) are disordered. The span at 21-31 (RGIGSGLGKTG) shows a compositional bias: gly residues. Basic residues predominate over residues 32–44 (GRGHKGQKSRSGG).

Belongs to the universal ribosomal protein uL15 family. Part of the 50S ribosomal subunit.

In terms of biological role, binds to the 23S rRNA. The polypeptide is Large ribosomal subunit protein uL15 (Aliivibrio fischeri (strain ATCC 700601 / ES114) (Vibrio fischeri)).